A 229-amino-acid polypeptide reads, in one-letter code: Complex I assembly factor TMEM126B, mitochondrial (229 aa).

A run of 4 helical transmembrane segments spans residues 71 to 91 (IRGT…ANLV), 109 to 129 (LTTL…TDAL), 140 to 160 (VLRS…ALAF), and 198 to 218 (VPLL…YAVC).

Part of the mitochondrial complex I assembly/MCIA complex that comprises at least the core subunits TMEM126B, NDUFAF1, ECSIT and ACAD9 and complement subunits such as COA1 and TMEM186. Associates with the intermediate 370 kDa subcomplex of incompletely assembled complex I. Interacts with TMEM70.

The protein localises to the mitochondrion membrane. In terms of biological role, as part of the MCIA complex, involved in the assembly of the mitochondrial complex I. Participates in constructing the membrane arm of complex I. This Rattus norvegicus (Rat) protein is Complex I assembly factor TMEM126B, mitochondrial.